The primary structure comprises 382 residues: 1-deoxy-D-xylulose 5-phosphate reductoisomerase (382 aa).

Residues threonine 10, glycine 11, serine 12, isoleucine 13, asparagine 38, and asparagine 120 each contribute to the NADPH site. Lysine 121 is a binding site for 1-deoxy-D-xylulose 5-phosphate. Glutamate 122 contributes to the NADPH binding site. Aspartate 146 is a Mn(2+) binding site. Residues serine 147, glutamate 148, serine 172, and histidine 195 each contribute to the 1-deoxy-D-xylulose 5-phosphate site. Glutamate 148 provides a ligand contact to Mn(2+). Residue glycine 201 coordinates NADPH. Serine 208, asparagine 213, lysine 214, and glutamate 217 together coordinate 1-deoxy-D-xylulose 5-phosphate. Glutamate 217 is a Mn(2+) binding site.

It belongs to the DXR family. Mg(2+) is required as a cofactor. It depends on Mn(2+) as a cofactor.

It catalyses the reaction 2-C-methyl-D-erythritol 4-phosphate + NADP(+) = 1-deoxy-D-xylulose 5-phosphate + NADPH + H(+). It participates in isoprenoid biosynthesis; isopentenyl diphosphate biosynthesis via DXP pathway; isopentenyl diphosphate from 1-deoxy-D-xylulose 5-phosphate: step 1/6. Functionally, catalyzes the NADPH-dependent rearrangement and reduction of 1-deoxy-D-xylulose-5-phosphate (DXP) to 2-C-methyl-D-erythritol 4-phosphate (MEP). The chain is 1-deoxy-D-xylulose 5-phosphate reductoisomerase from Thermoanaerobacter pseudethanolicus (strain ATCC 33223 / 39E) (Clostridium thermohydrosulfuricum).